The chain runs to 223 residues: Endonuclease V (223 aa).

Mg(2+)-binding residues include aspartate 35 and aspartate 103.

Belongs to the endonuclease V family. Mg(2+) serves as cofactor.

It is found in the cytoplasm. The enzyme catalyses Endonucleolytic cleavage at apurinic or apyrimidinic sites to products with a 5'-phosphate.. Its function is as follows. DNA repair enzyme involved in the repair of deaminated bases. Selectively cleaves double-stranded DNA at the second phosphodiester bond 3' to a deoxyinosine leaving behind the intact lesion on the nicked DNA. The protein is Endonuclease V of Shigella dysenteriae serotype 1 (strain Sd197).